The following is a 424-amino-acid chain: Tyrosine--tRNA ligase (424 aa).

Position 37 (Y37) interacts with L-tyrosine. The short motif at 42–51 is the 'HIGH' region element; that stretch reads PTADSLHLGH. The residue at position 144 (K144) is an N6-acetyllysine. Y175 and Q179 together coordinate L-tyrosine. Residues 235–239 carry the 'KMSKS' region motif; that stretch reads KFGKT. K238 contacts ATP. The 58-residue stretch at 357-414 folds into the S4 RNA-binding domain; sequence ADLMQALVDSELQPSRGQARKTIASNAITINGEKQSDPEYFFKEEDRLFGRFTLLRRG.

It belongs to the class-I aminoacyl-tRNA synthetase family. TyrS type 1 subfamily. Homodimer.

Its subcellular location is the cytoplasm. The catalysed reaction is tRNA(Tyr) + L-tyrosine + ATP = L-tyrosyl-tRNA(Tyr) + AMP + diphosphate + H(+). In terms of biological role, catalyzes the attachment of tyrosine to tRNA(Tyr) in a two-step reaction: tyrosine is first activated by ATP to form Tyr-AMP and then transferred to the acceptor end of tRNA(Tyr). The polypeptide is Tyrosine--tRNA ligase (Shigella dysenteriae serotype 1 (strain Sd197)).